We begin with the raw amino-acid sequence, 553 residues long: Glycerol kinase 2 (553 aa).

Thr20 is a binding site for substrate. Arg24 is a binding site for ATP. The substrate site is built by Arg94, Tyr148, and Asp259. ATP-binding positions include Thr281, Gly326, and 427–431 (GMTNN). Residues 526–546 (IFSSMPLGFFIVSSMVMLIGA) form a helical membrane-spanning segment.

It belongs to the FGGY kinase family. In terms of assembly, interacts with ARMC12 and PLD6.

It localises to the mitochondrion outer membrane. It is found in the cytoplasm. The enzyme catalyses glycerol + ATP = sn-glycerol 3-phosphate + ADP + H(+). Its pathway is polyol metabolism; glycerol degradation via glycerol kinase pathway; sn-glycerol 3-phosphate from glycerol: step 1/1. Its function is as follows. Key enzyme in the regulation of glycerol uptake and metabolism. Essential for male fertility and sperm mitochondrial sheath formation. Required for proper arrangement of crescent-like mitochondria to form the mitochondrial sheath during spermatogenesis. Can induce mitochondrial clustering through interactions with PLD6 and up-regulation of phosphatidic acid synthesis in the mitochondria. The chain is Glycerol kinase 2 (GK2) from Macaca fascicularis (Crab-eating macaque).